The sequence spans 179 residues: MAIEILRLGHRGERDKRISTHVALTSRALGAEKIIFTEDDKHVKESVERIVESWGGEFKFEVVKSWRTYTRRFKDNGIVVHLTMYGENINKIMTEIREDISKTNKNLLLIIGAEKVPREAYDLADYNLSVGNQPHSEVAALAIFLDRLTEGKTLYSEYDDAKIKVTPSKSEKCVFVEKD.

S-adenosyl-L-methionine-binding positions include Leu82, Gly112–Val116, and Val130–Glu137.

This sequence belongs to the aTrm56 family. As to quaternary structure, homodimer.

Its subcellular location is the cytoplasm. The enzyme catalyses cytidine(56) in tRNA + S-adenosyl-L-methionine = 2'-O-methylcytidine(56) in tRNA + S-adenosyl-L-homocysteine + H(+). Its function is as follows. Specifically catalyzes the AdoMet-dependent 2'-O-ribose methylation of cytidine at position 56 in tRNAs. This Methanococcus maripaludis (strain C7 / ATCC BAA-1331) protein is tRNA (cytidine(56)-2'-O)-methyltransferase.